The following is a 629-amino-acid chain: Histone-lysine N-methyltransferase set9 (629 aa).

The region spanning 120-234 is the SET domain; sequence CPFEVTTTNR…IGEEITVSYG (115 aa). 4 stretches are compositionally biased toward polar residues: residues 264–274, 338–350, 359–376, and 390–400; these read SEASSTASTPA, EQNTKIAVETTTD, NGVTENESNARVSENQRA, and ESQNSSASTAP. 2 disordered regions span residues 264–400 and 586–629; these read SEAS…STAP and VSFG…RMTM. Residues 597–614 show a composition bias toward basic and acidic residues; that stretch reads SEPRTETEDSEACDERRN.

Belongs to the class V-like SAM-binding methyltransferase superfamily. Histone-lysine methyltransferase family. Suvar4-20 subfamily.

The protein resides in the nucleus. The protein localises to the chromosome. It catalyses the reaction L-lysyl(20)-[histone H4] + 3 S-adenosyl-L-methionine = N(6),N(6),N(6)-trimethyl-L-lysyl(20)-[histone H4] + 3 S-adenosyl-L-homocysteine + 3 H(+). Histone methyltransferase that trimethylates 'Lys-20' of histone H4 to form H4K20me3. In Aspergillus terreus (strain NIH 2624 / FGSC A1156), this protein is Histone-lysine N-methyltransferase set9 (set9).